We begin with the raw amino-acid sequence, 457 residues long: Peptidyl-prolyl cis-trans isomerase FKBP5 (457 aa).

The residue at position 1 (M1) is an N-acetylmethionine. Residues 1–26 (MTTDEGAKNSGESPTATVAEQGEDIT) form a disordered region. Residue S13 is modified to Phosphoserine. The residue at position 28 (K28) is an N6-acetyllysine. The region spanning 50 to 138 (GDKVYVHYKG…FFEIELLDFK (89 aa)) is the PPIase FKBP-type 1 domain. K155 is modified (N6-acetyllysine). Positions 165–251 (GATVEIHLEG…IYEVTLKSFE (87 aa)) constitute a PPIase FKBP-type 2 domain. TPR repeat units lie at residues 268 to 301 (AAIV…LEME), 317 to 350 (LAAF…DSAN), and 351 to 384 (EKGL…NPQN). A disordered region spans residues 421-457 (AKEEANKAMGKKTSEGVTNEKGTDSSAVEEEKAEGHV). S445 carries the phosphoserine modification.

In terms of assembly, part of a heteromultimeric cytoplasmic complex with HSP90AA1, HSPA1A/HSPA1B and steroid receptors. Upon ligand binding dissociates from the complex and FKBP4 takes its place. Interacts with functionally mature heterooligomeric progesterone receptor complexes along with HSP90 and TEBP. Interacts with NR3C1. Interacts with Akt/AKT1 and PHLPP1; enhancing dephosphorylation and subsequent activation of Akt/AKT1. Interacts with IFI44L; this interaction modulates the kinase activity of IKBKB and IKBKE. Interacts with IKBKB and IKBKE. Acetylation impairs ability to promote interaction between Akt/AKT1 and PHLPP1. Deacetylation by SIRT7 promotes interaction between Akt/AKT1 and PHLPP1, leading to suppress Akt/AKT1 activation. Post-translationally, ubiquitinated, leading to degradation in a proteasome-dependent manner. Deubiquitinated by USP49, leading to stabilization.

It localises to the cytoplasm. It is found in the nucleus. It carries out the reaction [protein]-peptidylproline (omega=180) = [protein]-peptidylproline (omega=0). With respect to regulation, inhibited by both FK506 and rapamycin. Immunophilin protein with PPIase and co-chaperone activities. Component of unligated steroid receptors heterocomplexes through interaction with heat-shock protein 90 (HSP90). Plays a role in the intracellular trafficking of heterooligomeric forms of steroid hormone receptors maintaining the complex into the cytoplasm when unliganded. Acts as a regulator of Akt/AKT1 activity by promoting the interaction between Akt/AKT1 and PHLPP1, thereby enhancing dephosphorylation and subsequent activation of Akt/AKT1. Interacts with IKBKE and IKBKB which facilitates IKK complex assembly leading to increased IKBKE and IKBKB kinase activity, NF-kappaB activation, and IFN production. The polypeptide is Peptidyl-prolyl cis-trans isomerase FKBP5 (FKBP5) (Chlorocebus aethiops (Green monkey)).